The primary structure comprises 183 residues: Orotate phosphoribosyltransferase (183 aa).

5-phospho-alpha-D-ribose 1-diphosphate is bound by residues R21, K88, and 112-120; that span reads EDVVTTGES. Orotate contacts are provided by T116 and R144.

Belongs to the purine/pyrimidine phosphoribosyltransferase family. PyrE subfamily. As to quaternary structure, homodimer. The cofactor is Mg(2+).

It carries out the reaction orotidine 5'-phosphate + diphosphate = orotate + 5-phospho-alpha-D-ribose 1-diphosphate. The protein operates within pyrimidine metabolism; UMP biosynthesis via de novo pathway; UMP from orotate: step 1/2. Its function is as follows. Catalyzes the transfer of a ribosyl phosphate group from 5-phosphoribose 1-diphosphate to orotate, leading to the formation of orotidine monophosphate (OMP). This chain is Orotate phosphoribosyltransferase, found in Thermus thermophilus (strain ATCC 27634 / DSM 579 / HB8).